Here is a 59-residue protein sequence, read N- to C-terminus: Embryonic testis differentiation protein homolog A (59 aa).

The span at 1–10 shows a compositional bias: basic and acidic residues; that stretch reads MDKEVPKGSP. The segment at 1–25 is disordered; sequence MDKEVPKGSPREPALNIKKSDKSFK.

This chain is Embryonic testis differentiation protein homolog A, found in Homo sapiens (Human).